Here is a 264-residue protein sequence, read N- to C-terminus: Thymidylate synthase (264 aa).

DUMP is bound at residue arginine 21. Histidine 51 contributes to the (6R)-5,10-methylene-5,6,7,8-tetrahydrofolate binding site. 126 to 127 (RR) is a dUMP binding site. The Nucleophile role is filled by cysteine 146. Residues 166–169 (RSAD), asparagine 177, and 207–209 (HIY) contribute to the dUMP site. Position 169 (aspartate 169) interacts with (6R)-5,10-methylene-5,6,7,8-tetrahydrofolate. Alanine 263 is a (6R)-5,10-methylene-5,6,7,8-tetrahydrofolate binding site.

It belongs to the thymidylate synthase family. Bacterial-type ThyA subfamily. In terms of assembly, homodimer.

Its subcellular location is the cytoplasm. It catalyses the reaction dUMP + (6R)-5,10-methylene-5,6,7,8-tetrahydrofolate = 7,8-dihydrofolate + dTMP. The protein operates within pyrimidine metabolism; dTTP biosynthesis. Functionally, catalyzes the reductive methylation of 2'-deoxyuridine-5'-monophosphate (dUMP) to 2'-deoxythymidine-5'-monophosphate (dTMP) while utilizing 5,10-methylenetetrahydrofolate (mTHF) as the methyl donor and reductant in the reaction, yielding dihydrofolate (DHF) as a by-product. This enzymatic reaction provides an intracellular de novo source of dTMP, an essential precursor for DNA biosynthesis. This is Thymidylate synthase from Porphyromonas gingivalis (strain ATCC BAA-308 / W83).